Consider the following 519-residue polypeptide: UvrABC system protein C (519 aa).

Positions 9–87 constitute a GIY-YIG domain; sequence HLPGCYLFKN…IKKHWPRYNI (79 aa). The 36-residue stretch at 191–226 folds into the UVR domain; that stretch reads RELIESMEKDMRELASRQQFEQAMALRDEIAALEYL.

Belongs to the UvrC family. Interacts with UvrB in an incision complex.

The protein resides in the cytoplasm. The UvrABC repair system catalyzes the recognition and processing of DNA lesions. UvrC both incises the 5' and 3' sides of the lesion. The N-terminal half is responsible for the 3' incision and the C-terminal half is responsible for the 5' incision. This is UvrABC system protein C from Methanosarcina barkeri (strain Fusaro / DSM 804).